A 488-amino-acid polypeptide reads, in one-letter code: ATP synthase subunit beta (488 aa).

Position 155-162 (155-162 (GGAGVGKT)) interacts with ATP. Residues 467-488 (GFAPDDQNTDADEKPAAQAAAN) form a disordered region.

This sequence belongs to the ATPase alpha/beta chains family. As to quaternary structure, F-type ATPases have 2 components, CF(1) - the catalytic core - and CF(0) - the membrane proton channel. CF(1) has five subunits: alpha(3), beta(3), gamma(1), delta(1), epsilon(1). CF(0) has three main subunits: a(1), b(2) and c(9-12). The alpha and beta chains form an alternating ring which encloses part of the gamma chain. CF(1) is attached to CF(0) by a central stalk formed by the gamma and epsilon chains, while a peripheral stalk is formed by the delta and b chains.

It localises to the cell membrane. The catalysed reaction is ATP + H2O + 4 H(+)(in) = ADP + phosphate + 5 H(+)(out). In terms of biological role, produces ATP from ADP in the presence of a proton gradient across the membrane. The catalytic sites are hosted primarily by the beta subunits. The polypeptide is ATP synthase subunit beta (Lacticaseibacillus casei (strain BL23) (Lactobacillus casei)).